The primary structure comprises 650 residues: Primary amine oxidase 1 (650 aa).

The N-terminal stretch at 1 to 19 is a signal peptide; it reads MNTSILAILFLIQCVFTLG. N-linked (GlcNAc...) asparagine glycosylation is found at Asn2, Asn34, Asn62, and Asn149. An intrachain disulfide couples Cys155 to Cys176. Residue Asn235 is glycosylated (N-linked (GlcNAc...) asparagine). 308–319 provides a ligand contact to substrate; that stretch reads FMDIGEFGFGRS. The Proton acceptor role is filled by Asp310. Cys329 and Cys355 are disulfide-bonded. 395–400 serves as a coordination point for substrate; that stretch reads LGNYDY. The active-site Schiff-base intermediate with substrate; via topaquinone is the Tyr398. Tyr398 is subject to 2',4',5'-topaquinone. Residues His453 and His455 each coordinate Cu cation. Residues Asp462 and Asp464 each coordinate Mn(2+). N-linked (GlcNAc...) asparagine glycosylation occurs at Asn486. Residues Asp607 and Ile608 each coordinate Mn(2+). His618 lines the Cu cation pocket.

This sequence belongs to the copper/topaquinone oxidase family. Homodimer. Requires L-topaquinone as cofactor. Cu cation is required as a cofactor. It depends on Zn(2+) as a cofactor. The cofactor is Mn(2+). Post-translationally, topaquinone (TPQ) is generated by copper-dependent autoxidation of a specific tyrosyl residue. As to expression, expressed in the vascular tissues at the division/differentiation transition zone.

It localises to the secreted. It catalyses the reaction a primary methyl amine + O2 + H2O = an aldehyde + H2O2 + NH4(+). Its activity is regulated as follows. Repressed by semi-carbazide, a specific and irreversible inhibitor of copper amine oxidases. In terms of biological role, oxidizes preferentially the aliphatic diamine putrescine with production of the corresponding aldehyde, ammonia and hydrogen peroxide. May be involved in the regulation of developmental programmed cell death (PCD) in both vascular tissue and the root cap. Required for jasmonic acid-(MeJA) mediated early protoxylem differentiation associated with putrescine levels reduction and H(2)O(2) accumulation in roots. In Arabidopsis thaliana (Mouse-ear cress), this protein is Primary amine oxidase 1.